A 702-amino-acid chain; its full sequence is MNSLFASTARGLEELLKTELENLGAVECQVVQGGVHFKGDTRLVYQSLMWSRLASRIMLPLGECKVYSDLDLYLGVQAINWTEMFNPGATFAVHFSGLNDTIRNSQYGAMKVKDAIVDAFTRKNLPRPNVDRDAPDIRVNVWLHKETASIALDLSGDGLHLRGYRDRAGIAPIKETLAAAIVMRSGWQPGTPLLDPMCGSGTLLIEAAMLATDRAPGLHRGRWGFSGWTQHDEAIWQEVKAEAQTRARKGLAEYSSHFYGSDSDARVIQRARTNARLAGIGELITFEVNDVAQLANPLPKGPYGTVLSNPPYGERLDSEPALIALHSLLGRIMKNQFGGWNLSLFSASPDLLSCLQLRADKQYKAKNGPLDCVQKNYHVAESTPDSKPVMAAEDYANRLRKNLKKFEKWARQEGIECYRLYDADLPEYNVAVDRYADWVVVQEYAPPKTIDAHKARQRLFDIIAATISVLGIAPNKLVLKTRERQKGKNQYQKLGEKGEFLEVTEYNAHLWVNLTDYLDTGLFLDHRIARRMLGQMSKGKDFLNLFSYTGSATVHAGLGGARSTTTVDMSRTYLEWAERNLRLNGLTGRAHRLIQADCLAWLREANEQFDLIFIDPPTFSNSKRMEDAFDVQRDHLALMKDLKRLLRAGGTIMFSNNKRGFRMDLDGLAKLGLKAQEITQKTLSQDFARNRQIHNCWLITAA.

Positions 43–154 constitute a THUMP domain; that stretch reads LVYQSLMWSR…KETASIALDL (112 aa).

This sequence belongs to the methyltransferase superfamily. RlmKL family.

It is found in the cytoplasm. The enzyme catalyses guanosine(2445) in 23S rRNA + S-adenosyl-L-methionine = N(2)-methylguanosine(2445) in 23S rRNA + S-adenosyl-L-homocysteine + H(+). It carries out the reaction guanosine(2069) in 23S rRNA + S-adenosyl-L-methionine = N(2)-methylguanosine(2069) in 23S rRNA + S-adenosyl-L-homocysteine + H(+). Functionally, specifically methylates the guanine in position 2445 (m2G2445) and the guanine in position 2069 (m7G2069) of 23S rRNA. In Escherichia coli O6:H1 (strain CFT073 / ATCC 700928 / UPEC), this protein is Ribosomal RNA large subunit methyltransferase K/L.